The following is a 293-amino-acid chain: Eukaryotic translation initiation factor 3 subunit F (293 aa).

An N-acetylalanine modification is found at Ala2. One can recognise an MPN domain in the interval 28-159 (ARIHPLVIFN…IKAFVSSNLS (132 aa)).

Belongs to the eIF-3 subunit F family. As to quaternary structure, component of the eukaryotic translation initiation factor 3 (eIF-3) complex. Binds to TIF3E1 and TIF3H1. In terms of tissue distribution, expressed in inflorescences, leaves, stems, siliques, roots and seedlings. Accumulates at highly levels in pollen grains, developing embryos and root tips.

It is found in the cytoplasm. Component of the eukaryotic translation initiation factor 3 (eIF-3) complex, which is involved in protein synthesis of a specialized repertoire of mRNAs and, together with other initiation factors, stimulates binding of mRNA and methionyl-tRNAi to the 40S ribosome. The eIF-3 complex specifically targets and initiates translation of a subset of mRNAs involved in cell proliferation (Potential). Involved in cell growth and differentiation, especially during embryogenesis and male gametophyte germination. Regulates sensitivity to sugars (e.g. sucrose). This Arabidopsis thaliana (Mouse-ear cress) protein is Eukaryotic translation initiation factor 3 subunit F (TIF3F1).